We begin with the raw amino-acid sequence, 202 residues long: MDIEKIYKESGALLKGHFLLSSGKHSPNYLQSAKVLEDPKKAELLAKELAKQIQAAGIEVDTVCSPAIGGLLAGYELARALGVRFIFTERKDGKMTLRRGFEVEPGEKVLICEDIITTGGSAMEAAKEMEKRGAEVVAFAALANRGVCQRTGSEIPSKSECKLPSNKTLFALADFTFPIYEPKECPMCAEGSEPIKPGSRGN.

Position 113-121 (113-121) interacts with 5-phospho-alpha-D-ribose 1-diphosphate; the sequence is EDIITTGGS. T117 and R145 together coordinate orotate.

The protein belongs to the purine/pyrimidine phosphoribosyltransferase family. PyrE subfamily. In terms of assembly, homodimer. It depends on Mg(2+) as a cofactor.

The enzyme catalyses orotidine 5'-phosphate + diphosphate = orotate + 5-phospho-alpha-D-ribose 1-diphosphate. Its pathway is pyrimidine metabolism; UMP biosynthesis via de novo pathway; UMP from orotate: step 1/2. Its function is as follows. Catalyzes the transfer of a ribosyl phosphate group from 5-phosphoribose 1-diphosphate to orotate, leading to the formation of orotidine monophosphate (OMP). This is Orotate phosphoribosyltransferase from Nitratiruptor sp. (strain SB155-2).